The primary structure comprises 1177 residues: Chromosome partition protein Smc (1177 aa).

Residue Ala34–Asn41 participates in ATP binding. Residues Ser167–Arg506 adopt a coiled-coil conformation. Residues Gly521 to Arg627 form the SMC hinge domain. Positions Leu659–Val1012 form a coiled coil.

Belongs to the SMC family. In terms of assembly, homodimer.

The protein resides in the cytoplasm. Required for chromosome condensation and partitioning. Binds single-stranded but not double-stranded DNA. This Pyrococcus furiosus (strain ATCC 43587 / DSM 3638 / JCM 8422 / Vc1) protein is Chromosome partition protein Smc.